The following is a 75-amino-acid chain: Caerin 1.11 (75 aa).

A signal peptide spans 1 to 22 (MASLKKSLFLVLFLGFVSVSIC). Residues 23 to 49 (EEEKRQEDEDEHEEEGENQEEGSEEKR) constitute a propeptide that is removed on maturation. Positions 24–48 (EEKRQEDEDEHEEEGENQEEGSEEK) are disordered. Residues 30-45 (DEDEHEEEGENQEEGS) show a composition bias toward acidic residues. Leu74 is subject to Leucine amide.

This sequence belongs to the frog skin active peptide (FSAP) family. Caerin subfamily. Expressed by the skin glands.

Its subcellular location is the secreted. It is found in the target cell membrane. Cationic amphipathic alpha-helical antimicrobial peptide with weak or no activity against both Gram-positive and Gram-negative bacteria. Is weakly active against E.coli (MIC=25 uM), E.cloacae (MIC=50 uM), K.pneumoniae (MIC=25 uM), and S.haemolyticus (MIC=50 uM). Has no activity against S.typhimurium, S.enteritidis, B.megaterium, and S.aureus (MIC&gt;100 uM). The sequence is that of Caerin 1.11 from Ranoidea caerulea (Green tree frog).